The primary structure comprises 240 residues: Probable ATP synthase 24 kDa subunit, mitochondrial (240 aa).

Residues 1–32 constitute a mitochondrion transit peptide; that stretch reads MAYASRFLSRSKQLQGGLVILQQQHAIPVRAF. Composition is skewed to basic and acidic residues over residues 210 to 222 and 229 to 240; these read AVEAMESQKKKEE and PDVKSLDIRNFI. The segment at 210 to 240 is disordered; that stretch reads AVEAMESQKKKEEFQDEEMPDVKSLDIRNFI.

Its subcellular location is the mitochondrion. It is found in the mitochondrion inner membrane. In terms of biological role, mitochondrial membrane ATP synthase (F(1)F(0) ATP synthase or Complex V) produces ATP from ADP in the presence of a proton gradient across the membrane which is generated by electron transport complexes of the respiratory chain. F-type ATPases consist of two structural domains, F(1) - containing the extramembraneous catalytic core and F(0) - containing the membrane proton channel, linked together by a central stalk and a peripheral stalk. During catalysis, ATP synthesis in the catalytic domain of F(1) is coupled via a rotary mechanism of the central stalk subunits to proton translocation. Part of the complex F(0) domain. This Arabidopsis thaliana (Mouse-ear cress) protein is Probable ATP synthase 24 kDa subunit, mitochondrial.